We begin with the raw amino-acid sequence, 237 residues long: Urease accessory protein UreF (237 aa).

This sequence belongs to the UreF family. As to quaternary structure, ureD, UreF and UreG form a complex that acts as a GTP-hydrolysis-dependent molecular chaperone, activating the urease apoprotein by helping to assemble the nickel containing metallocenter of UreC. The UreE protein probably delivers the nickel.

The protein resides in the cytoplasm. Functionally, required for maturation of urease via the functional incorporation of the urease nickel metallocenter. In Rhodopseudomonas palustris (strain HaA2), this protein is Urease accessory protein UreF.